Here is a 160-residue protein sequence, read N- to C-terminus: Cyclic pyranopterin monophosphate synthase (160 aa).

Substrate is bound by residues 75-77 (LCH) and 113-114 (ME). D128 is a catalytic residue.

It belongs to the MoaC family. As to quaternary structure, homohexamer; trimer of dimers.

It carries out the reaction (8S)-3',8-cyclo-7,8-dihydroguanosine 5'-triphosphate = cyclic pyranopterin phosphate + diphosphate. It functions in the pathway cofactor biosynthesis; molybdopterin biosynthesis. Its function is as follows. Catalyzes the conversion of (8S)-3',8-cyclo-7,8-dihydroguanosine 5'-triphosphate to cyclic pyranopterin monophosphate (cPMP). This is Cyclic pyranopterin monophosphate synthase from Sodalis glossinidius (strain morsitans).